The sequence spans 117 residues: Putative membrane protein insertion efficiency factor (117 aa).

Belongs to the UPF0161 family.

The protein localises to the cell inner membrane. Its function is as follows. Could be involved in insertion of integral membrane proteins into the membrane. The protein is Putative membrane protein insertion efficiency factor of Bartonella bacilliformis (strain ATCC 35685 / KC583 / Herrer 020/F12,63).